The following is a 421-amino-acid chain: MHQTITEKIFSDHVGREVFANEIIESGIDMVIGNDITTPISIKQFERSGATKLANPEGFCIVMDHYIPAKDILSANQAKISRDFAYKHDLKYFFDEKDMGIEHALLPEKGLIVPGDVIIGADSHTCTHGALGAFSTGMGSTDLAYAMITGKNWFKVPPTIKVVFRGKLGRHVYGKDLILEIIRQIGVDGARYKALEFCGETIDALDMDGRFSMCNMAIEAGGKSGIIAVDETTREFLKGKNLRAEPKFFYSDEGAGYERVLEIYADKLDPVIAYPFLPSNGKSVREAVKDDIAIDQAFIGSCTNGRLSDLRIAAEILKGRKVSRKTRLIITPATQKIALAAQKEGLMDIFVEAGAVVSNPTCGACLGGYMGILGAGERCVSTTNRNFVGRMGDRTSEVYLANSAVAAASAIAGKIADPREL.

[4Fe-4S] cluster contacts are provided by C302, C362, and C365.

It belongs to the aconitase/IPM isomerase family. LeuC type 2 subfamily. In terms of assembly, heterodimer of LeuC and LeuD. Requires [4Fe-4S] cluster as cofactor.

It carries out the reaction (2R,3S)-3-isopropylmalate = (2S)-2-isopropylmalate. Its pathway is amino-acid biosynthesis; L-leucine biosynthesis; L-leucine from 3-methyl-2-oxobutanoate: step 2/4. In terms of biological role, catalyzes the isomerization between 2-isopropylmalate and 3-isopropylmalate, via the formation of 2-isopropylmaleate. This is 3-isopropylmalate dehydratase large subunit from Campylobacter curvus (strain 525.92).